We begin with the raw amino-acid sequence, 310 residues long: Lipoyl synthase (310 aa).

Cys45, Cys50, Cys56, Cys71, Cys75, Cys78, and Ser285 together coordinate [4Fe-4S] cluster. Positions 57–274 (WTKKHATVMI…GSIARAKGFL (218 aa)) constitute a Radical SAM core domain.

The protein belongs to the radical SAM superfamily. Lipoyl synthase family. [4Fe-4S] cluster is required as a cofactor.

It is found in the cytoplasm. The catalysed reaction is [[Fe-S] cluster scaffold protein carrying a second [4Fe-4S](2+) cluster] + N(6)-octanoyl-L-lysyl-[protein] + 2 oxidized [2Fe-2S]-[ferredoxin] + 2 S-adenosyl-L-methionine + 4 H(+) = [[Fe-S] cluster scaffold protein] + N(6)-[(R)-dihydrolipoyl]-L-lysyl-[protein] + 4 Fe(3+) + 2 hydrogen sulfide + 2 5'-deoxyadenosine + 2 L-methionine + 2 reduced [2Fe-2S]-[ferredoxin]. Its pathway is protein modification; protein lipoylation via endogenous pathway; protein N(6)-(lipoyl)lysine from octanoyl-[acyl-carrier-protein]: step 2/2. Its function is as follows. Catalyzes the radical-mediated insertion of two sulfur atoms into the C-6 and C-8 positions of the octanoyl moiety bound to the lipoyl domains of lipoate-dependent enzymes, thereby converting the octanoylated domains into lipoylated derivatives. This chain is Lipoyl synthase, found in Novosphingobium aromaticivorans (strain ATCC 700278 / DSM 12444 / CCUG 56034 / CIP 105152 / NBRC 16084 / F199).